We begin with the raw amino-acid sequence, 310 residues long: Beta-ketoacyl-[acyl-carrier-protein] synthase III 1 (310 aa).

Residues cysteine 112 and histidine 235 contribute to the active site. An ACP-binding region spans residues 236–240; it reads QANIR. Asparagine 265 is an active-site residue.

This sequence belongs to the thiolase-like superfamily. FabH family. As to quaternary structure, homodimer.

The protein resides in the cytoplasm. It catalyses the reaction malonyl-[ACP] + acetyl-CoA + H(+) = 3-oxobutanoyl-[ACP] + CO2 + CoA. It participates in lipid metabolism; fatty acid biosynthesis. Functionally, catalyzes the condensation reaction of fatty acid synthesis by the addition to an acyl acceptor of two carbons from malonyl-ACP. Catalyzes the first condensation reaction which initiates fatty acid synthesis and may therefore play a role in governing the total rate of fatty acid production. Possesses both acetoacetyl-ACP synthase and acetyl transacylase activities. Its substrate specificity determines the biosynthesis of branched-chain and/or straight-chain of fatty acids. The sequence is that of Beta-ketoacyl-[acyl-carrier-protein] synthase III 1 from Bacillus cereus (strain ATCC 14579 / DSM 31 / CCUG 7414 / JCM 2152 / NBRC 15305 / NCIMB 9373 / NCTC 2599 / NRRL B-3711).